An 848-amino-acid polypeptide reads, in one-letter code: DIS3-like exonuclease 2 (848 aa).

The disordered stretch occupies residues 153–173; it reads KGDRNSGKTDNNSPNKTEKRC. Residues aspartate 345 and aspartate 354 each contribute to the Mg(2+) site.

Belongs to the RNR ribonuclease family. DIS3L2 subfamily. Mg(2+) serves as cofactor. It depends on Mn(2+) as a cofactor. Cleaved by caspase ced-3 in vitro.

Its subcellular location is the cytoplasm. It is found in the P-body. Functionally, 3'-5'-exoribonuclease that specifically recognizes RNAs polyuridylated at their 3' end and mediates their degradation. Component of an exosome-independent RNA degradation pathway that mediates degradation of cytoplasmic mRNAs that have been deadenylated and subsequently uridylated at their 3'. In Caenorhabditis elegans, this protein is DIS3-like exonuclease 2.